The following is a 287-amino-acid chain: Fructose-bisphosphate aldolase (287 aa).

Ser-50 contributes to the D-glyceraldehyde 3-phosphate binding site. Asp-85 functions as the Proton donor in the catalytic mechanism. Residues His-86, Asp-107, Glu-137, and His-181 each coordinate Zn(2+). Residue Gly-182 coordinates dihydroxyacetone phosphate. Residue His-209 participates in Zn(2+) binding. Dihydroxyacetone phosphate-binding positions include 210–212 and 231–234; these read GGT and NVNT. A phosphothreonine mark is found at Thr-212 and Thr-234.

The protein belongs to the class II fructose-bisphosphate aldolase family. Zn(2+) is required as a cofactor.

It catalyses the reaction beta-D-fructose 1,6-bisphosphate = D-glyceraldehyde 3-phosphate + dihydroxyacetone phosphate. It participates in carbohydrate degradation; glycolysis; D-glyceraldehyde 3-phosphate and glycerone phosphate from D-glucose: step 4/4. Its function is as follows. Catalyzes the aldol condensation of dihydroxyacetone phosphate (DHAP or glycerone-phosphate) with glyceraldehyde 3-phosphate (G3P) to form fructose 1,6-bisphosphate (FBP) in gluconeogenesis and the reverse reaction in glycolysis. The chain is Fructose-bisphosphate aldolase (fba) from Geobacillus stearothermophilus (Bacillus stearothermophilus).